The sequence spans 247 residues: ATP synthase subunit C lysine N-methyltransferase (247 aa).

Residue Met-1 is modified to N-acetylmethionine. Over residues 1–12 (MERVGTPEEERQ) the composition is skewed to basic and acidic residues. The tract at residues 1–25 (MERVGTPEEERQAGPVLPTSLESDS) is disordered. Residues 34–54 (LITGVVGGALLTVYAVATPFI) form a helical membrane-spanning segment. Residues 51 to 85 (TPFITPALRKVCLPFVPATSKQVENVVRMLRHRRG) form a required for mitochondrial location region. A disordered region spans residues 209 to 247 (QRGRGGRPNQEWVGQKNLSETAGLQASSSETRSKLLDVE). A compositionally biased stretch (polar residues) spans 224–238 (KNLSETAGLQASSSE).

It belongs to the ANT/ATPSC lysine N-methyltransferase family. Ubiquitously expressed.

The protein resides in the mitochondrion membrane. It carries out the reaction L-lysyl-[protein] + 3 S-adenosyl-L-methionine = N(6),N(6),N(6)-trimethyl-L-lysyl-[protein] + 3 S-adenosyl-L-homocysteine + 3 H(+). Its function is as follows. Mitochondrial protein-lysine N-methyltransferase that trimethylates ATP synthase subunit C, ATP5MC1 and ATP5MC2. Trimethylation is required for proper incorporation of the C subunit into the ATP synthase complex and mitochondrial respiration. Promotes chronic pain. Involved in persistent inflammatory and neuropathic pain: methyltransferase activity in the mitochondria of sensory neurons promotes chronic pain via a pathway that depends on the production of reactive oxygen species (ROS) and on the engagement of spinal cord microglia. This is ATP synthase subunit C lysine N-methyltransferase from Mus musculus (Mouse).